The sequence spans 37 residues: Large ribosomal subunit protein bL36 (37 aa).

This sequence belongs to the bacterial ribosomal protein bL36 family.

The chain is Large ribosomal subunit protein bL36 from Halorhodospira halophila (strain DSM 244 / SL1) (Ectothiorhodospira halophila (strain DSM 244 / SL1)).